Here is a 603-residue protein sequence, read N- to C-terminus: Elongation factor 4 (603 aa).

The 185-residue stretch at 7-191 (SNIRNFSIVA…AIVTRLPPPK (185 aa)) folds into the tr-type G domain. Residues 19–24 (DHGKST) and 138–141 (NKVD) contribute to the GTP site.

Belongs to the TRAFAC class translation factor GTPase superfamily. Classic translation factor GTPase family. LepA subfamily.

The protein resides in the cell inner membrane. The catalysed reaction is GTP + H2O = GDP + phosphate + H(+). Functionally, required for accurate and efficient protein synthesis under certain stress conditions. May act as a fidelity factor of the translation reaction, by catalyzing a one-codon backward translocation of tRNAs on improperly translocated ribosomes. Back-translocation proceeds from a post-translocation (POST) complex to a pre-translocation (PRE) complex, thus giving elongation factor G a second chance to translocate the tRNAs correctly. Binds to ribosomes in a GTP-dependent manner. This Bradyrhizobium diazoefficiens (strain JCM 10833 / BCRC 13528 / IAM 13628 / NBRC 14792 / USDA 110) protein is Elongation factor 4.